A 398-amino-acid polypeptide reads, in one-letter code: uncharacterized protein (398 aa).

The chain crosses the membrane as a helical span at residues 88–108; sequence IGFTIGFAIFFILLFLLSNMV.

The protein to B.megaterium SpoIV.

The protein resides in the cell membrane. This is an uncharacterized protein from Bacillus subtilis (strain 168).